Consider the following 331-residue polypeptide: Inositol 2-dehydrogenase (331 aa).

The protein belongs to the Gfo/Idh/MocA family. As to quaternary structure, homotetramer.

The enzyme catalyses myo-inositol + NAD(+) = scyllo-inosose + NADH + H(+). Involved in the oxidation of myo-inositol (MI) to 2-keto-myo-inositol (2KMI or 2-inosose). The polypeptide is Inositol 2-dehydrogenase (Renibacterium salmoninarum (strain ATCC 33209 / DSM 20767 / JCM 11484 / NBRC 15589 / NCIMB 2235)).